Here is a 387-residue protein sequence, read N- to C-terminus: tRNA-specific 2-thiouridylase MnmA (387 aa).

ATP is bound by residues 34–41 (AMSGGVDS) and Met60. The active-site Nucleophile is Cys127. Residues Cys127 and Cys223 are joined by a disulfide bond. Residue Gly151 participates in ATP binding. The segment at 173-175 (KDQ) is interaction with tRNA. The Cysteine persulfide intermediate role is filled by Cys223.

It belongs to the MnmA/TRMU family.

Its subcellular location is the cytoplasm. The catalysed reaction is S-sulfanyl-L-cysteinyl-[protein] + uridine(34) in tRNA + AH2 + ATP = 2-thiouridine(34) in tRNA + L-cysteinyl-[protein] + A + AMP + diphosphate + H(+). In terms of biological role, catalyzes the 2-thiolation of uridine at the wobble position (U34) of tRNA, leading to the formation of s(2)U34. The protein is tRNA-specific 2-thiouridylase MnmA of Anaplasma marginale (strain St. Maries).